The sequence spans 704 residues: Elongation factor G (704 aa).

One can recognise a tr-type G domain in the interval 10 to 290 (NKVRNIGIMA…AVIDYLPSPL (281 aa)). Residues 19–26 (AHIDAGKT), 83–87 (DTPGH), and 137–140 (NKMD) contribute to the GTP site.

The protein belongs to the TRAFAC class translation factor GTPase superfamily. Classic translation factor GTPase family. EF-G/EF-2 subfamily.

It localises to the cytoplasm. Its function is as follows. Catalyzes the GTP-dependent ribosomal translocation step during translation elongation. During this step, the ribosome changes from the pre-translocational (PRE) to the post-translocational (POST) state as the newly formed A-site-bound peptidyl-tRNA and P-site-bound deacylated tRNA move to the P and E sites, respectively. Catalyzes the coordinated movement of the two tRNA molecules, the mRNA and conformational changes in the ribosome. The chain is Elongation factor G from Clavibacter sepedonicus (Clavibacter michiganensis subsp. sepedonicus).